A 129-amino-acid chain; its full sequence is MSEAPKRSEKSADYKKAVAKQRRIKKLRKMKIKDRAGDVVVSDISDVEVVGNGDEESQDDWLNDLLKSDGDGGKAGPVDPSHPMETTTTDHSSQNTLASKICAFTYDNSALLGVGIVTVALSIFARLRK.

Positions 52–94 (NGDEESQDDWLNDLLKSDGDGGKAGPVDPSHPMETTTTDHSSQ) are disordered. Residues 53–62 (GDEESQDDWL) show a composition bias toward acidic residues. Residues 84–94 (METTTTDHSSQ) are compositionally biased toward polar residues.

This is an uncharacterized protein from Caenorhabditis elegans.